Here is a 244-residue protein sequence, read N- to C-terminus: uncharacterized protein (244 aa).

6 helical membrane-spanning segments follow: residues 22 to 42, 63 to 83, 110 to 130, 140 to 160, 186 to 206, and 213 to 233; these read IMLQFVAILFIVQSASALLSF, FIFSVAITQILTSFIAAWGLT, VILLDLLMVAPMLLGLGEAFA, IMSLIAMLVGVWFFVRLNLTV, GVLFIYTLLVYFLVPILIFQL, and AVFDMVIGIFTALLNIFMLVV.

The protein localises to the cell membrane. This is an uncharacterized protein from Haemophilus influenzae (strain ATCC 51907 / DSM 11121 / KW20 / Rd).